Reading from the N-terminus, the 274-residue chain is Rhamnulose-1-phosphate aldolase (274 aa).

Glutamate 117 is a catalytic residue. Zn(2+) is bound by residues histidine 141, histidine 143, and histidine 212.

The protein belongs to the aldolase class II family. RhaD subfamily. As to quaternary structure, homotetramer. Zn(2+) is required as a cofactor.

The protein localises to the cytoplasm. It catalyses the reaction L-rhamnulose 1-phosphate = (S)-lactaldehyde + dihydroxyacetone phosphate. Its pathway is carbohydrate degradation; L-rhamnose degradation; glycerone phosphate from L-rhamnose: step 3/3. Functionally, catalyzes the reversible cleavage of L-rhamnulose-1-phosphate to dihydroxyacetone phosphate (DHAP) and L-lactaldehyde. The polypeptide is Rhamnulose-1-phosphate aldolase (Escherichia coli O17:K52:H18 (strain UMN026 / ExPEC)).